Here is a 148-residue protein sequence, read N- to C-terminus: Ribonuclease H (148 aa).

The region spanning 1–142 (MSDSVEMFTD…ADQLANRGVD (142 aa)) is the RNase H type-1 domain. Residues Asp-10, Glu-48, Asp-70, and Asp-134 each coordinate Mg(2+).

Belongs to the RNase H family. Monomer. Mg(2+) serves as cofactor.

It localises to the cytoplasm. It catalyses the reaction Endonucleolytic cleavage to 5'-phosphomonoester.. Functionally, endonuclease that specifically degrades the RNA of RNA-DNA hybrids. The chain is Ribonuclease H from Pseudomonas putida (strain ATCC 700007 / DSM 6899 / JCM 31910 / BCRC 17059 / LMG 24140 / F1).